A 166-amino-acid polypeptide reads, in one-letter code: Phosphopantetheine adenylyltransferase (166 aa).

Position 11 (Thr-11) interacts with substrate. Residues 11 to 12 (TF) and His-19 each bind ATP. Residues Lys-43, Thr-79, and Arg-93 each contribute to the substrate site. ATP-binding positions include Glu-104 and 128–134 (LEPLNST).

The protein belongs to the bacterial CoaD family. As to quaternary structure, homohexamer. Requires Mg(2+) as cofactor.

Its subcellular location is the cytoplasm. It carries out the reaction (R)-4'-phosphopantetheine + ATP + H(+) = 3'-dephospho-CoA + diphosphate. It functions in the pathway cofactor biosynthesis; coenzyme A biosynthesis; CoA from (R)-pantothenate: step 4/5. Its function is as follows. Reversibly transfers an adenylyl group from ATP to 4'-phosphopantetheine, yielding dephospho-CoA (dPCoA) and pyrophosphate. This chain is Phosphopantetheine adenylyltransferase, found in Lactococcus lactis subsp. cremoris (strain MG1363).